A 1173-amino-acid polypeptide reads, in one-letter code: Pleckstrin homology domain-containing family A member 6 (1173 aa).

Polar residues predominate over residues Met-1–Met-22. Residues Met-1–Ser-39 form a disordered region. One can recognise a PH domain in the interval Pro-59–Arg-158. The interval Pro-163–Arg-346 is disordered. Residues Leu-201–Leu-233 are compositionally biased toward basic and acidic residues. Phosphoserine occurs at positions 247 and 251. Polar residues-rich tracts occupy residues Asn-270 to Gly-281 and Arg-311 to Val-322. Residues Ser-314, Ser-459, Ser-461, and Ser-472 each carry the phosphoserine modification. A Phosphotyrosine modification is found at Tyr-492. A Phosphoserine modification is found at Ser-665. Disordered stretches follow at residues Arg-737–Ile-872 and Ala-888–Tyr-984. 2 stretches are compositionally biased toward low complexity: residues Ser-761–Ser-782 and Gly-789–Glu-799. The span at Glu-815–Pro-824 shows a compositional bias: pro residues. Position 864 is a phosphoserine (Ser-864). At Thr-868 the chain carries Phosphothreonine. A Phosphoserine modification is found at Ser-901. Thr-908 carries the post-translational modification Phosphothreonine. Polar residues predominate over residues Arg-915–Ser-926. Ser-925 is subject to Phosphoserine. The segment covering Gly-940 to Arg-952 has biased composition (basic and acidic residues). The span at Met-953–Ser-967 shows a compositional bias: basic residues. Residues Ser-973, Ser-979, and Ser-992 each carry the phosphoserine modification. Residue Thr-1045 is modified to Phosphothreonine. Phosphoserine is present on Ser-1065. Disordered regions lie at residues Pro-1093–Glu-1114 and Arg-1130–Val-1173. The residue at position 1140 (Thr-1140) is a Phosphothreonine. Over residues Pro-1141–Asn-1155 the composition is skewed to pro residues. Phosphoserine is present on Ser-1142. Thr-1145 carries the phosphothreonine modification. Phosphoserine occurs at positions 1146 and 1149. At Thr-1151 the chain carries Phosphothreonine.

In Mus musculus (Mouse), this protein is Pleckstrin homology domain-containing family A member 6 (Plekha6).